Consider the following 497-residue polypeptide: Probable cytosol aminopeptidase (497 aa).

Mn(2+) is bound by residues Lys267 and Asp272. Residue Lys279 is part of the active site. Residues Asp290, Asp349, and Glu351 each contribute to the Mn(2+) site. Arg353 is an active-site residue.

It belongs to the peptidase M17 family. Mn(2+) is required as a cofactor.

It is found in the cytoplasm. It catalyses the reaction Release of an N-terminal amino acid, Xaa-|-Yaa-, in which Xaa is preferably Leu, but may be other amino acids including Pro although not Arg or Lys, and Yaa may be Pro. Amino acid amides and methyl esters are also readily hydrolyzed, but rates on arylamides are exceedingly low.. It carries out the reaction Release of an N-terminal amino acid, preferentially leucine, but not glutamic or aspartic acids.. Presumably involved in the processing and regular turnover of intracellular proteins. Catalyzes the removal of unsubstituted N-terminal amino acids from various peptides. The protein is Probable cytosol aminopeptidase of Pseudomonas entomophila (strain L48).